The sequence spans 534 residues: Bifunctional purine biosynthesis protein PurH (534 aa).

Residues 6–151 form the MGS-like domain; sequence TRLPIRRALI…KNHKDVAIVV (146 aa).

The protein belongs to the PurH family.

It carries out the reaction (6R)-10-formyltetrahydrofolate + 5-amino-1-(5-phospho-beta-D-ribosyl)imidazole-4-carboxamide = 5-formamido-1-(5-phospho-D-ribosyl)imidazole-4-carboxamide + (6S)-5,6,7,8-tetrahydrofolate. It catalyses the reaction IMP + H2O = 5-formamido-1-(5-phospho-D-ribosyl)imidazole-4-carboxamide. It functions in the pathway purine metabolism; IMP biosynthesis via de novo pathway; 5-formamido-1-(5-phospho-D-ribosyl)imidazole-4-carboxamide from 5-amino-1-(5-phospho-D-ribosyl)imidazole-4-carboxamide (10-formyl THF route): step 1/1. It participates in purine metabolism; IMP biosynthesis via de novo pathway; IMP from 5-formamido-1-(5-phospho-D-ribosyl)imidazole-4-carboxamide: step 1/1. This is Bifunctional purine biosynthesis protein PurH from Pseudomonas syringae pv. tomato (strain ATCC BAA-871 / DC3000).